We begin with the raw amino-acid sequence, 550 residues long: Solute carrier family 22 member 6 (550 aa).

At 1–9 (MAFNDLLQQ) the chain is on the cytoplasmic side. Residues 10 to 30 (VGGVGRFQQIQVTLVVLPLLL) traverse the membrane as a helical segment. The Extracellular segment spans residues 31-135 (MASHNTVQNF…LVCSHRALRQ (105 aa)). N-linked (GlcNAc...) asparagine glycosylation is found at Asn-56, Asn-92, and Asn-113. A helical membrane pass occupies residues 136–156 (LAQSLYMVGVLLGAMVFGYLA). The Cytoplasmic segment spans residues 157–164 (DRLGRRKV). Residues 165–187 (LILNYLQTAVSGTCAAFAPNFPI) traverse the membrane as a helical segment. At 188-190 (YCA) the chain is on the extracellular side. Residues 191-213 (FRLLSGMSLAGIALNCMTLNVEW) form a helical membrane-spanning segment. Residues 214 to 224 (MPIHTRACVGT) are Cytoplasmic-facing. A helical transmembrane segment spans residues 225 to 245 (LIGYVYSLGQFLLAGVAYAVP). Topologically, residues 246 to 248 (HWR) are extracellular. A helical membrane pass occupies residues 249–269 (HLQLLISVPFFAFFIYSWFFI). At 270-337 (ESARWHSSSG…ELLRCPTLRH (68 aa)) the chain is on the cytoplasmic side. The chain crosses the membrane as a helical span at residues 338-358 (LFLCLSMLWFATSFAYYGLVM). Topologically, residues 359-368 (DLQGFGVSIY) are extracellular. Residues 369-389 (LIQVIFGAVDLPAKLVGFLVI) traverse the membrane as a helical segment. Topologically, residues 390-395 (NSLGRR) are cytoplasmic. The helical transmembrane segment at 396–416 (PAQMAALLLAGICILLNGVVP) threads the bilayer. The Extracellular portion of the chain corresponds to 417 to 425 (QDQSVIRTS). The chain crosses the membrane as a helical span at residues 426 to 446 (LAVLGKGCLAASFNCIFLYTG). The Cytoplasmic portion of the chain corresponds to 447–456 (ELYPTMIRQT). Residues 457–477 (GLGMGSTMARVGSIVSPLVSM) form a helical membrane-spanning segment. Residues 478–484 (TTELYPS) lie on the Extracellular side of the membrane. The helical transmembrane segment at 485–505 (VPLFIYGAVPVAASAVTVLLP) threads the bilayer. Topologically, residues 506-550 (ETLGQPLPDTVQDLESRKGKQTPQQQEHQKYMVPLQASAQEKNGL) are cytoplasmic. Residues 513 to 550 (PDTVQDLESRKGKQTPQQQEHQKYMVPLQASAQEKNGL) form a disordered region.

It belongs to the major facilitator (TC 2.A.1) superfamily. Organic cation transporter (TC 2.A.1.19) family. Post-translationally, glycosylated. Glycosylation is necessary for proper targeting of the transporter to the plasma membrane. In terms of tissue distribution, expressed in kidney; in the basolateral membrane of the proximal tubule.

The protein resides in the basolateral cell membrane. Its subcellular location is the basal cell membrane. It catalyses the reaction (6R)-L-erythro-5,6,7,8-tetrahydrobiopterin(out) + a dicarboxylate(in) = (6R)-L-erythro-5,6,7,8-tetrahydrobiopterin(in) + a dicarboxylate(out). The catalysed reaction is L-erythro-7,8-dihydrobiopterin(out) + a dicarboxylate(in) = L-erythro-7,8-dihydrobiopterin(in) + a dicarboxylate(out). It carries out the reaction L-sepiapterin(out) + a dicarboxylate(in) = L-sepiapterin(in) + a dicarboxylate(out). The enzyme catalyses prostaglandin F2alpha(out) + a dicarboxylate(in) = prostaglandin F2alpha(in) + a dicarboxylate(out). It catalyses the reaction prostaglandin E2(out) + a dicarboxylate(in) = prostaglandin E2(in) + a dicarboxylate(out). The catalysed reaction is 3',5'-cyclic AMP(out) + a dicarboxylate(in) = 3',5'-cyclic AMP(in) + a dicarboxylate(out). It carries out the reaction 3',5'-cyclic GMP(out) + a dicarboxylate(in) = 3',5'-cyclic GMP(in) + a dicarboxylate(out). The enzyme catalyses urate(out) + a dicarboxylate(in) = urate(in) + a dicarboxylate(out). It catalyses the reaction kynurenate(out) + glutarate(in) = kynurenate(in) + glutarate(out). The catalysed reaction is (indol-3-yl)acetate(out) + a dicarboxylate(in) = (indol-3-yl)acetate(in) + a dicarboxylate(out). It carries out the reaction indoxyl sulfate(out) + a dicarboxylate(in) = indoxyl sulfate(in) + a dicarboxylate(out). The enzyme catalyses N-benzoylglycine(out) + a dicarboxylate(in) = N-benzoylglycine(in) + a dicarboxylate(out). It catalyses the reaction 3-carboxy-4-methyl-5-propyl-2-furanpropanoate(out) + a dicarboxylate(in) = 3-carboxy-4-methyl-5-propyl-2-furanpropanoate(in) + a dicarboxylate(out). Functionally, secondary active transporter that functions as a Na(+)-independent organic anion (OA)/dicarboxylate antiporter where the uptake of one molecule of OA into the cell is coupled with an efflux of one molecule of intracellular dicarboxylate such as 2-oxoglutarate or glutarate. Mediates the uptake of OA across the basolateral side of proximal tubule epithelial cells, thereby contributing to the renal elimination of endogenous OA from the systemic circulation into the urine. Functions as a biopterin transporters involved in the uptake and the secretion of coenzymes tetrahydrobiopterin (BH4), dihydrobiopterin (BH2) and sepiapterin to urine, thereby determining baseline levels of blood biopterins. Transports prostaglandin E2 (PGE2) and prostaglandin F2-alpha (PGF2-alpha) and may contribute to their renal excretion. Also mediates the uptake of cyclic nucleotides such as cAMP and cGMP. Involved in the transport of neuroactive tryptophan metabolites kynurenate (KYNA) and xanthurenate (XA) and may contribute to their secretion from the brain. May transport glutamate. Also involved in the disposition of uremic toxins and potentially toxic xenobiotics by the renal organic anion secretory pathway, helping reduce their undesired toxicological effects on the body. Uremic toxins include the indoxyl sulfate (IS), hippurate/N-benzoylglycine (HA), indole acetate (IA), 3-carboxy-4- methyl-5-propyl-2-furanpropionate (CMPF) and urate. Xenobiotics include the mycotoxin ochratoxin (OTA). May also contribute to the transport of organic compounds in testes across the blood-testis-barrier. The protein is Solute carrier family 22 member 6 of Macaca fascicularis (Crab-eating macaque).